The primary structure comprises 474 residues: Bifunctional protein HldE (474 aa).

The segment at 1 to 318 is ribokinase; the sequence is MKLSMPRFDQ…RAIQREEGSE (318 aa). ATP is bound at residue 194-197; sequence NLSE. Asp-263 is a catalytic residue. Residues 343-474 form a cytidylyltransferase region; that stretch reads FTNGCFDILH…AIVEKIRGQG (132 aa).

In the N-terminal section; belongs to the carbohydrate kinase PfkB family. This sequence in the C-terminal section; belongs to the cytidylyltransferase family. Homodimer.

It catalyses the reaction D-glycero-beta-D-manno-heptose 7-phosphate + ATP = D-glycero-beta-D-manno-heptose 1,7-bisphosphate + ADP + H(+). The catalysed reaction is D-glycero-beta-D-manno-heptose 1-phosphate + ATP + H(+) = ADP-D-glycero-beta-D-manno-heptose + diphosphate. Its pathway is nucleotide-sugar biosynthesis; ADP-L-glycero-beta-D-manno-heptose biosynthesis; ADP-L-glycero-beta-D-manno-heptose from D-glycero-beta-D-manno-heptose 7-phosphate: step 1/4. It participates in nucleotide-sugar biosynthesis; ADP-L-glycero-beta-D-manno-heptose biosynthesis; ADP-L-glycero-beta-D-manno-heptose from D-glycero-beta-D-manno-heptose 7-phosphate: step 3/4. Functionally, catalyzes the phosphorylation of D-glycero-D-manno-heptose 7-phosphate at the C-1 position to selectively form D-glycero-beta-D-manno-heptose-1,7-bisphosphate. In terms of biological role, catalyzes the ADP transfer from ATP to D-glycero-beta-D-manno-heptose 1-phosphate, yielding ADP-D-glycero-beta-D-manno-heptose. The chain is Bifunctional protein HldE from Pseudomonas savastanoi pv. phaseolicola (strain 1448A / Race 6) (Pseudomonas syringae pv. phaseolicola (strain 1448A / Race 6)).